A 176-amino-acid polypeptide reads, in one-letter code: NAD(P)H-quinone oxidoreductase subunit 6, chloroplastic (176 aa).

A run of 5 helical transmembrane segments spans residues 10-30 (FLLVFLGSGLLFGSLGVVLFP), 32-52 (PIFSAFSLGFVLVCISLLYIL), 61-81 (AQLLIYVGAITVLIIFAVMFM), 95-115 (VGDGITSVICTTILFSLISTI), and 152-172 (FFLPFELISIILLVALIGAIS).

This sequence belongs to the complex I subunit 6 family. NDH is composed of at least 16 different subunits, 5 of which are encoded in the nucleus.

It is found in the plastid. Its subcellular location is the chloroplast thylakoid membrane. The catalysed reaction is a plastoquinone + NADH + (n+1) H(+)(in) = a plastoquinol + NAD(+) + n H(+)(out). It carries out the reaction a plastoquinone + NADPH + (n+1) H(+)(in) = a plastoquinol + NADP(+) + n H(+)(out). In terms of biological role, NDH shuttles electrons from NAD(P)H:plastoquinone, via FMN and iron-sulfur (Fe-S) centers, to quinones in the photosynthetic chain and possibly in a chloroplast respiratory chain. The immediate electron acceptor for the enzyme in this species is believed to be plastoquinone. Couples the redox reaction to proton translocation, and thus conserves the redox energy in a proton gradient. This chain is NAD(P)H-quinone oxidoreductase subunit 6, chloroplastic (ndhG), found in Aethionema cordifolium (Lebanon stonecress).